An 886-amino-acid polypeptide reads, in one-letter code: Desmocollin-1 (886 aa).

The N-terminal stretch at 1-29 (MAVACAAPGSTFSKQLLFFLLVLVLFCDA) is a signal peptide. A propeptide spanning residues 30–134 (CQKVSLHVPS…KEPVHNRSKR (105 aa)) is cleaved from the precursor. Residues asparagine 130 and asparagine 165 are each glycosylated (N-linked (GlcNAc...) asparagine). Cadherin domains lie at 135 to 242 (RWAP…APYF), 243 to 354 (ETKL…SPYF), 355 to 471 (TQTS…GPEC), 472 to 575 (QPPV…DHPP), and 576 to 682 (QIDK…EERD). Residues 135-691 (RWAPIPCSLM…DAKPNIILGK (557 aa)) lie on the Extracellular side of the membrane. Residue threonine 385 is modified to Phosphothreonine. Asparagine 546 carries an N-linked (GlcNAc...) (high mannose) asparagine glycan. N-linked (GlcNAc...) asparagine glycosylation occurs at asparagine 613. The chain crosses the membrane as a helical span at residues 692–714 (WAILAMVLGSALLLCILFTCFCV). Over 715–886 (TTTKRTVKKC…RTLAKTCVKK (172 aa)) the chain is Cytoplasmic.

Binds to JUP/plakoglobin. In terms of tissue distribution, expressed in the epidermis and inner root sheaths of hair follicles (at protein level).

The protein resides in the cell membrane. It localises to the cell junction. The protein localises to the desmosome. A component of desmosome cell-cell junctions which are required for positive regulation of cellular adhesion. Required for desmosome adhesion strength between the granular layers of the epidermis, as a result moderates epidermal proliferation and differentiation. Is therefore required to maintain postnatal epidermal barrier function and normal hair follicle morphology into adulthood. The polypeptide is Desmocollin-1 (Dsc1) (Mus musculus (Mouse)).